The sequence spans 314 residues: Lipoyl synthase (314 aa).

The [4Fe-4S] cluster site is built by Cys-61, Cys-66, Cys-72, Cys-87, Cys-91, Cys-94, and Ser-301. The 218-residue stretch at 73-290 (FGRGTATFMI…EEEAKKMGFS (218 aa)) folds into the Radical SAM core domain.

The protein belongs to the radical SAM superfamily. Lipoyl synthase family. It depends on [4Fe-4S] cluster as a cofactor.

The protein resides in the cytoplasm. It catalyses the reaction [[Fe-S] cluster scaffold protein carrying a second [4Fe-4S](2+) cluster] + N(6)-octanoyl-L-lysyl-[protein] + 2 oxidized [2Fe-2S]-[ferredoxin] + 2 S-adenosyl-L-methionine + 4 H(+) = [[Fe-S] cluster scaffold protein] + N(6)-[(R)-dihydrolipoyl]-L-lysyl-[protein] + 4 Fe(3+) + 2 hydrogen sulfide + 2 5'-deoxyadenosine + 2 L-methionine + 2 reduced [2Fe-2S]-[ferredoxin]. The protein operates within protein modification; protein lipoylation via endogenous pathway; protein N(6)-(lipoyl)lysine from octanoyl-[acyl-carrier-protein]: step 2/2. Functionally, catalyzes the radical-mediated insertion of two sulfur atoms into the C-6 and C-8 positions of the octanoyl moiety bound to the lipoyl domains of lipoate-dependent enzymes, thereby converting the octanoylated domains into lipoylated derivatives. The protein is Lipoyl synthase of Dechloromonas aromatica (strain RCB).